The following is a 1040-amino-acid chain: Multidrug resistance protein MdtB (1040 aa).

Helical transmembrane passes span 16–36 (FIMRPVATTLLMVAILLAGII), 347–367 (LMMAIALVVMIIYLFLRNIPA), 369–389 (IIPGVAVPLSLIGTFAVMVFL), 396–416 (LTLMALTIATGFVVDDAIVVI), 440–460 (IGFTIISLTFSLIAVLIPLLF), 472–492 (FAITLAVAILISAVVSLTLTP), 537–557 (WLTLSVALSTLLLSVLLWVFI), 863–883 (LGSTVWLIVAAVVAMYIVLGI), 888–908 (FIHPITILSTLPTAGVGALLA), 911–931 (IAGSELDVIAIIGIILLIGIV), 968–988 (ILMTTLAALLGALPLMLSTGV), and 998–1018 (IGMVGGLIVSQVLTLFTTPVI).

The protein belongs to the resistance-nodulation-cell division (RND) (TC 2.A.6) family. MdtB subfamily. In terms of assembly, part of a tripartite efflux system composed of MdtA, MdtB and MdtC. MdtB forms a heteromultimer with MdtC.

It localises to the cell inner membrane. Its function is as follows. The MdtABC tripartite complex confers resistance against novobiocin and deoxycholate. This is Multidrug resistance protein MdtB from Escherichia coli (strain K12 / MC4100 / BW2952).